We begin with the raw amino-acid sequence, 385 residues long: Tryptophan--tRNA ligase (385 aa).

A 'HIGH' region motif is present at residues 89-98; that stretch reads PSSKTMHIGH. Residues 268–272 carry the 'KMSKS' region motif; it reads KMSAS.

Belongs to the class-I aminoacyl-tRNA synthetase family. Homodimer.

The catalysed reaction is tRNA(Trp) + L-tryptophan + ATP = L-tryptophyl-tRNA(Trp) + AMP + diphosphate + H(+). This Encephalitozoon cuniculi (strain GB-M1) (Microsporidian parasite) protein is Tryptophan--tRNA ligase.